A 367-amino-acid polypeptide reads, in one-letter code: Serine/threonine-protein kinase Sgk2 (367 aa).

Residues 1–28 (MASSPVGVPSPQPSRANGNINLGPSANP) form a disordered region. Position 10 is a phosphoserine (serine 10). Positions 15–28 (RANGNINLGPSANP) are enriched in polar residues. The Protein kinase domain maps to 35–292 (FDFLKVIGKG…FLDIKNHMFF (258 aa)). ATP is bound by residues 41–49 (IGKGNYGKV) and lysine 64. The short motif at 68 to 78 (KKSILKNKEQN) is the Nuclear localization signal element. Catalysis depends on aspartate 159, which acts as the Proton acceptor. Threonine 193 carries the post-translational modification Phosphothreonine; by PDPK1. Residues 293-367 (SPINWDDLYH…AQDDDDILDS (75 aa)) enclose the AGC-kinase C-terminal domain. Residues serine 334 and serine 356 each carry the phosphoserine modification. Position 357 is a phosphotyrosine (tyrosine 357).

Belongs to the protein kinase superfamily. AGC Ser/Thr protein kinase family. Activated by phosphorylation on Ser-356 by an unknown kinase (may be mTORC2 but not confirmed), transforming it into a substrate for PDPK1 which then phosphorylates it on Thr-193.

The protein localises to the cytoplasm. It is found in the nucleus. The catalysed reaction is L-seryl-[protein] + ATP = O-phospho-L-seryl-[protein] + ADP + H(+). It catalyses the reaction L-threonyl-[protein] + ATP = O-phospho-L-threonyl-[protein] + ADP + H(+). Its activity is regulated as follows. Two specific sites, one in the kinase domain (Thr-193) and the other in the C-terminal regulatory region (Ser-356), need to be phosphorylated for its full activation. In terms of biological role, serine/threonine-protein kinase which is involved in the regulation of a wide variety of ion channels, membrane transporters, cell growth, survival and proliferation. Up-regulates Na(+) channels: SCNN1A/ENAC, K(+) channels: KCNA3/Kv1.3, KCNE1 and KCNQ1, amino acid transporter: SLC6A19, glutamate transporter: SLC1A6/EAAT4, glutamate receptors: GRIA1/GLUR1 and GRIK2/GLUR6, Na(+)/H(+) exchanger: SLC9A3/NHE3, and the Na(+)/K(+) ATPase. This chain is Serine/threonine-protein kinase Sgk2 (Sgk2), found in Mus musculus (Mouse).